Consider the following 1156-residue polypeptide: ATP-dependent RNA helicase glh-4 (1156 aa).

4 disordered regions span residues 1 to 81 (MSFS…GAPS), 194 to 213 (TGVGASEVPTSKPSSFGQQP), 231 to 423 (SSSG…DSST), and 436 to 522 (HRAS…SGLG). Basic and acidic residues predominate over residues 12 to 22 (AEVKVAEDVPE). The span at 24 to 34 (NVPPPVEPPRA) shows a compositional bias: pro residues. Polar residues-rich tracts occupy residues 60–73 (ITTSKTFGSQTTPK), 194–211 (TGVGASEVPTSKPSSFGQ), and 243–258 (TESSGFPTKETSTSQP). Residues 259–281 (GFGGDSSTGFGSGLKAGFGGHGA) show a composition bias toward gly residues. Residues 307–319 (ASSSNESAFGQQS) show a composition bias toward polar residues. Gly residues-rich tracts occupy residues 321–332 (GFGGATKNGFGG) and 342–358 (SKAGFGGTSSSGIGGQK). Polar residues-rich tracts occupy residues 362–371 (TESSGFPTKE) and 395–406 (PSTTDSSSGQQT). Over residues 408–423 (GFGGASKPGFGGDSST) the composition is skewed to gly residues. Composition is skewed to polar residues over residues 440-451 (TAENSGLPTETT) and 464-476 (ASSSNESAFGQQS). Over residues 478-489 (GFGGATKNGFGG) the composition is skewed to gly residues. CCHC-type zinc fingers lie at residues 570-587 (RGCHNCGEEGHISKECDK), 593-610 (FPCRNCEQLGHFASDCDQ), 616-633 (GPCRNCGIEGHFAVDCDQ), 639-656 (GPCRNCGQEGHFAKDCQN), and 665-682 (EPCRRCAEEGHWGYECPT). The short motif at 736–764 (SFDGFKILPQDLHDNLKRMKMNRPTPIQR) is the Q motif element. The region spanning 767-951 (FFPIMHGNDV…LPKFVKEGYT (185 aa)) is the Helicase ATP-binding domain. ATP is bound at residue 780–787 (AHTGSGKT). A DEAD box motif is present at residues 897 to 900 (DEAD). One can recognise a Helicase C-terminal domain in the interval 986–1139 (GIDENTVTLL…EVPEWLTEGA (154 aa)). Positions 1135–1156 (LTEGAGHQEEGGDDWNEQEQEW) are disordered. Over residues 1145–1156 (GGDDWNEQEQEW) the composition is skewed to acidic residues.

It belongs to the DEAD box helicase family. DDX4/VASA subfamily. In terms of assembly, interacts (via C-terminus) with kgb-1.

It catalyses the reaction ATP + H2O = ADP + phosphate + H(+). Its function is as follows. Probable ATP-binding RNA helicase. May act redundantly with the P-granule component glh-1 to regulate the formation of the granular structure of P-granules in embryos. May protect somatic cells from excessive apoptosis during normal development. This Caenorhabditis elegans protein is ATP-dependent RNA helicase glh-4.